Reading from the N-terminus, the 92-residue chain is Cell division protein FtsB (92 aa).

Topologically, residues 1–3 (MRL) are cytoplasmic. A helical transmembrane segment spans residues 4–21 (FVFFMLCLLVLLQYHLWF). The Periplasmic segment spans residues 22–92 (GKNGLGDRHN…TFFRIVPKED (71 aa)). Residues 28–62 (DRHNLQEEVTLILENNSELRQRNQMMFSEIKDLKE) are a coiled coil.

The protein belongs to the FtsB family. Part of a complex composed of FtsB, FtsL and FtsQ.

The protein resides in the cell inner membrane. In terms of biological role, essential cell division protein. May link together the upstream cell division proteins, which are predominantly cytoplasmic, with the downstream cell division proteins, which are predominantly periplasmic. The polypeptide is Cell division protein FtsB (Psychromonas ingrahamii (strain DSM 17664 / CCUG 51855 / 37)).